A 259-amino-acid polypeptide reads, in one-letter code: MAVTGPWVGSSAVVNTGQNWMVGAAQRLRMGAPFWMSNMIGRSVEVIHTLGADHNFNGQWFRDRCFEAGSAPIVFNITGDLVSYSRDVPLFFMYGDTPNEYVQLNIHGVTMYGRGGNGWAACAIGASDGGVCIQNDIGGRLRINNGGAIAGGGGGGGGYSQANNWAGKYVCGGGGGRPFGLGGNNGARWPGGNASLTSPGAGGNTGTRYYAGGGGEVGQPGQYANPGASYSTPPTSPGAAVAGSAPTWQNVGAIYGPRV.

Short sequence motifs (GRM) lie at residues Gly113–Cys122, Ile124–Val131, Gly151–Gln161, Asn164–Arg177, Gly180–Gly186, Trp189–Ser195, Thr197–Asn204, Tyr210–Glu216, Gln219–Ala224, and Gly227–Ala239. Positions Gly213 to Gly243 are disordered.

It belongs to the receptor-recognizing protein gp38 family.

It localises to the virion. Receptor binding protein (RBP) that is at the tip of the long tail fibers and serves as the phage recognition site for the attachment host receptor OmpC. The polypeptide is Receptor-recognizing protein gp38 (38) (Escherichia phage AR1 (Bacteriophage AR1)).